Consider the following 155-residue polypeptide: LGELKHLHYLHAALHESMRLYPPVQFDSKFAKHDDVLPDGTFVKRGSRVTYHPYAMGRMERIWGADSLEFKPERWIRDGEFKQERAYKYPVYQGGVRVCLGKEMSLVEMASVALCLIRRFDVSVVNHSQLRFAPGLTATVSGGVHATVRRRDLSQ.

Residue C99 participates in heme binding.

The protein belongs to the cytochrome P450 family. Requires heme as cofactor.

In Helianthus annuus (Common sunflower), this protein is Cytochrome P450.